A 321-amino-acid polypeptide reads, in one-letter code: CPX chromosomal region candidate gene 1 protein homolog (321 aa).

The segment at Met-1–Glu-83 is disordered. Polar residues-rich tracts occupy residues Asn-21–Glu-32 and Val-44–Glu-60.

The polypeptide is CPX chromosomal region candidate gene 1 protein homolog (CPXCR1) (Macaca fascicularis (Crab-eating macaque)).